Here is an 89-residue protein sequence, read N- to C-terminus: Small ribosomal subunit protein bS20 (89 aa).

The segment covering M1–K12 has biased composition (basic residues). The tract at residues M1–Q24 is disordered.

The protein belongs to the bacterial ribosomal protein bS20 family.

Functionally, binds directly to 16S ribosomal RNA. The polypeptide is Small ribosomal subunit protein bS20 (Xanthomonas campestris pv. campestris (strain 8004)).